The primary structure comprises 161 residues: Cyclic pyranopterin monophosphate synthase (161 aa).

Substrate is bound by residues Leu-75–His-77 and Met-113–Glu-114. The active site involves Asp-128.

It belongs to the MoaC family. In terms of assembly, homohexamer; trimer of dimers.

It catalyses the reaction (8S)-3',8-cyclo-7,8-dihydroguanosine 5'-triphosphate = cyclic pyranopterin phosphate + diphosphate. The protein operates within cofactor biosynthesis; molybdopterin biosynthesis. Its function is as follows. Catalyzes the conversion of (8S)-3',8-cyclo-7,8-dihydroguanosine 5'-triphosphate to cyclic pyranopterin monophosphate (cPMP). This chain is Cyclic pyranopterin monophosphate synthase, found in Citrobacter koseri (strain ATCC BAA-895 / CDC 4225-83 / SGSC4696).